An 82-amino-acid chain; its full sequence is Small ribosomal subunit protein uS17 (82 aa).

This sequence belongs to the universal ribosomal protein uS17 family. As to quaternary structure, part of the 30S ribosomal subunit.

One of the primary rRNA binding proteins, it binds specifically to the 5'-end of 16S ribosomal RNA. This Shewanella amazonensis (strain ATCC BAA-1098 / SB2B) protein is Small ribosomal subunit protein uS17.